The chain runs to 206 residues: Ras-related protein RABG3c (206 aa).

Position 15–22 (15–22 (GDSGVGKT)) interacts with GTP. The Effector region motif lies at 37 to 45 (YKATIGADF). Residues 63–67 (DTAGQ), 125–128 (NKTD), and 158–159 (SA) each bind GTP. 2 S-geranylgeranyl cysteine lipidation sites follow: Cys-204 and Cys-206. At Cys-206 the chain carries Cysteine methyl ester.

The protein belongs to the small GTPase superfamily. Rab family.

Its subcellular location is the cell membrane. In terms of biological role, intracellular vesicle trafficking and protein transport. The chain is Ras-related protein RABG3c (RABG3C) from Arabidopsis thaliana (Mouse-ear cress).